We begin with the raw amino-acid sequence, 337 residues long: Probable E3 ubiquitin-protein ligase LUL1 (337 aa).

Gly-2 is lipidated: N-myristoyl glycine. Positions 139-255 (FTFDASMPGR…GEIKIEVVKQ (117 aa)) are DAR2 domain. Residues 285–324 (CVVCLSEPRDTTVLPCRHMCMCSGCAKALRFQTNLCPVCR) form an RING-type; atypical zinc finger.

Belongs to the RING-type zinc finger family. LOG2 subfamily. Myristoylated (in vitro).

The catalysed reaction is S-ubiquitinyl-[E2 ubiquitin-conjugating enzyme]-L-cysteine + [acceptor protein]-L-lysine = [E2 ubiquitin-conjugating enzyme]-L-cysteine + N(6)-ubiquitinyl-[acceptor protein]-L-lysine.. Its pathway is protein modification; protein ubiquitination. Its function is as follows. Acts as an E3 ubiquitin-protein ligase, or as part of E3 complex, which accepts ubiquitin from specific E2 ubiquitin-conjugating enzymes and then transfers it to substrates (in vitro). The protein is Probable E3 ubiquitin-protein ligase LUL1 (LUL1) of Arabidopsis thaliana (Mouse-ear cress).